The chain runs to 373 residues: Alpha-1,3-mannosyl-glycoprotein 4-beta-N-acetylglucosaminyltransferase-like protein MGAT4D (373 aa).

Residues M1 to N5 are Cytoplasmic-facing. A helical; Signal-anchor for type II membrane protein transmembrane segment spans residues V6 to S26. The Lumenal segment spans residues R27–Y373. 3 N-linked (GlcNAc...) asparagine glycosylation sites follow: N29, N54, and N144.

The protein belongs to the glycosyltransferase 54 family. In terms of assembly, isoform 2 self-associates; specifically in the endoplasmic reticulum prior to its translocation to the Golgi. Isoform 1 and isoform 2 interact with MGAT1, MGAT3 and MAN2A2; isoform 2 interacts specifically with MGAT1 in the Golgi. Post-translationally, isoform 2 is N-glycosylated; consisting of high-mannose and/or hybrid glycans. In terms of tissue distribution, isoform 1 and isoform 2 are specifically expressed in testis. Isoform 2 is expressed in spermatocytes but not in spermatids. Isoform 1 is expressed in spermatids.

The protein localises to the endoplasmic reticulum membrane. It is found in the endoplasmic reticulum-Golgi intermediate compartment membrane. It localises to the golgi apparatus membrane. May play a role in male spermatogenesis. In vitro acts as inhibitor of MGAT1 activity causing cell surface proteins to carry mainly high mannose N-glycans. The function is mediated by its lumenal domain and occurs specifically in the Golgi. A catalytic glucosyltransferase activity is not detected. May be involved in regulation of Sertoli-germ cell interactions during specific stages of spermatogenesis. This chain is Alpha-1,3-mannosyl-glycoprotein 4-beta-N-acetylglucosaminyltransferase-like protein MGAT4D, found in Mus musculus (Mouse).